A 971-amino-acid polypeptide reads, in one-letter code: Breast cancer type 2 susceptibility protein homolog (971 aa).

Positions 1–15 are enriched in polar residues; that stretch reads MDQNGASGSHPNRLS. 4 disordered regions span residues 1-30, 130-155, 349-395, and 420-466; these read MDQN…ATVS, SRKR…LSVQ, KLKL…DQPN, and MQCS…SSHQ. The segment covering 130–139 has biased composition (basic residues); sequence SRKRDPKSHK. Basic and acidic residues predominate over residues 349–364; it reads KLKLEPSSQKEQKSSK. 3 stretches are compositionally biased toward polar residues: residues 375-392, 420-432, and 453-466; these read SKQS…TILD, MQCS…SKNA, and KQTP…SSHQ. BRCA2 repeat units follow at residues 570-604, 671-705, and 746-780; these read AEPE…EFQS, NESQ…QSKA, and SETE…EFQA. The disordered stretch occupies residues 916–971; that stretch reads MERFAPKPSSTSTPLADRDLNRSKDCTKNRQDAEDMSPICMQPKKSRRLGLSRSRY. The segment covering 931 to 948 has biased composition (basic and acidic residues); that stretch reads ADRDLNRSKDCTKNRQDA. Residues 959–971 are compositionally biased toward basic residues; that stretch reads KKSRRLGLSRSRY.

In terms of assembly, interacts with Rad9. Interacts with spn-A/Rad51. Interacts with cyclin CycG.

The protein localises to the nucleus. Involved in and required for double-strand break repair by meiotic and mitotic homologous recombination. During meiosis, has a dual role in the repair of meiotic double-stranded breaks and the efficient activation of the meiotic recombination checkpoint. This is Breast cancer type 2 susceptibility protein homolog from Drosophila melanogaster (Fruit fly).